The chain runs to 191 residues: Molybdenum cofactor guanylyltransferase (191 aa).

Residues 13-15 (LAG), lysine 26, aspartate 72, and aspartate 102 contribute to the GTP site. Position 102 (aspartate 102) interacts with Mg(2+).

The protein belongs to the MobA family. Monomer. It depends on Mg(2+) as a cofactor.

The protein localises to the cytoplasm. The catalysed reaction is Mo-molybdopterin + GTP + H(+) = Mo-molybdopterin guanine dinucleotide + diphosphate. Its function is as follows. Transfers a GMP moiety from GTP to Mo-molybdopterin (Mo-MPT) cofactor (Moco or molybdenum cofactor) to form Mo-molybdopterin guanine dinucleotide (Mo-MGD) cofactor. This chain is Molybdenum cofactor guanylyltransferase, found in Pseudomonas putida (strain ATCC 700007 / DSM 6899 / JCM 31910 / BCRC 17059 / LMG 24140 / F1).